The following is a 252-amino-acid chain: uncharacterized protein (252 aa).

A Clp R domain is found at Phe-96 to Ala-238. Repeat stretches follow at residues Phe-99–Thr-164 and Phe-172–Ala-238.

This sequence belongs to the ClpA/ClpB family. ClpC subfamily.

This is an uncharacterized protein from Mycobacterium bovis (strain ATCC BAA-935 / AF2122/97).